A 90-amino-acid polypeptide reads, in one-letter code: MLEFLTRLFSKDGGSKNVAKERLRLVLVHDRTSISPQLLETLKAELIKVISNYMEIDEAALEVSLDSSGNTVALVASIPVKGMKRVAGTA.

It belongs to the MinE family.

In terms of biological role, prevents the cell division inhibition by proteins MinC and MinD at internal division sites while permitting inhibition at polar sites. This ensures cell division at the proper site by restricting the formation of a division septum at the midpoint of the long axis of the cell. This Pelotomaculum thermopropionicum (strain DSM 13744 / JCM 10971 / SI) protein is Cell division topological specificity factor.